Reading from the N-terminus, the 36-residue chain is Cytochrome b6-f complex subunit 5 (36 aa).

Residues 5-25 (LLSGIVLGLIPITILGLLMAA) traverse the membrane as a helical segment.

It belongs to the PetG family. The 4 large subunits of the cytochrome b6-f complex are cytochrome b6, subunit IV (17 kDa polypeptide, PetD), cytochrome f and the Rieske protein, while the 4 small subunits are PetG, PetL, PetM and PetN. The complex functions as a dimer.

The protein resides in the plastid. Its subcellular location is the chloroplast thylakoid membrane. In terms of biological role, component of the cytochrome b6-f complex, which mediates electron transfer between photosystem II (PSII) and photosystem I (PSI), cyclic electron flow around PSI, and state transitions. PetG is required for either the stability or assembly of the cytochrome b6-f complex. This chain is Cytochrome b6-f complex subunit 5, found in Cyanidioschyzon merolae (strain NIES-3377 / 10D) (Unicellular red alga).